Consider the following 414-residue polypeptide: MQHNKLREVRGTKDLLDDELYRFQYIQHLAQTIASRYGFIPVDTPIIEFTEVFTKLGNTSDIVTKEMYNFKDKAGEDITLRPEFTSAIVRLLISKNLTIPVKLFSSGPVFRYERPQKCRQRQFHQINFEFFGSDSPIADVEMISLCYNILSELKLSDRIKLEINFLGDQETINSYKIHLVEYLNKYQKDLSEDSQRRLVVNPLRILDSKSPEDCKILLNAPSISDFYTQNSQNFFKEVLDGLDNLSINYVINHNIVRGLDYYCKTVFEFTTSELGSQNSVIAGGRYDGLVKSMGGHSTPAIGFAAGVERLSALIDYEHKKPKRIVLIPIGDDATSYAIKLAYELRCKGIHVCWNNYRGTSLKNELRKANDTDIVLIFGDEELQSNTVKVKDMKTGDQQNVAVCDLLDNLLHRIV.

This sequence belongs to the class-II aminoacyl-tRNA synthetase family. Homodimer.

It localises to the cytoplasm. The enzyme catalyses tRNA(His) + L-histidine + ATP = L-histidyl-tRNA(His) + AMP + diphosphate + H(+). In Ehrlichia ruminantium (strain Gardel), this protein is Histidine--tRNA ligase.